The chain runs to 303 residues: Ornithine carbamoyltransferase (303 aa).

Carbamoyl phosphate is bound by residues 52-55 (STRT), Gln79, Arg103, and 130-133 (HPCQ). L-ornithine contacts are provided by residues Asn161, Asp222, and 226-227 (SM). Residues 262–263 (CL) and Arg290 contribute to the carbamoyl phosphate site.

It belongs to the aspartate/ornithine carbamoyltransferase superfamily. OTCase family.

The protein localises to the cytoplasm. The enzyme catalyses carbamoyl phosphate + L-ornithine = L-citrulline + phosphate + H(+). The protein operates within amino-acid biosynthesis; L-arginine biosynthesis; L-arginine from L-ornithine and carbamoyl phosphate: step 1/3. In terms of biological role, reversibly catalyzes the transfer of the carbamoyl group from carbamoyl phosphate (CP) to the N(epsilon) atom of ornithine (ORN) to produce L-citrulline. The sequence is that of Ornithine carbamoyltransferase from Geobacter sulfurreducens (strain ATCC 51573 / DSM 12127 / PCA).